Reading from the N-terminus, the 127-residue chain is Fluoride-specific ion channel FluC (127 aa).

Helical transmembrane passes span 4-24, 35-55, 71-91, and 103-123; these read LLLA…LLSM, LGTL…FAWF, TGFC…VFLL, and VFVN…LFSA. 2 residues coordinate Na(+): glycine 75 and threonine 78.

The protein belongs to the fluoride channel Fluc/FEX (TC 1.A.43) family.

It is found in the cell inner membrane. It carries out the reaction fluoride(in) = fluoride(out). Na(+) is not transported, but it plays an essential structural role and its presence is essential for fluoride channel function. In terms of biological role, fluoride-specific ion channel. Important for reducing fluoride concentration in the cell, thus reducing its toxicity. In Shigella flexneri serotype 5b (strain 8401), this protein is Fluoride-specific ion channel FluC.